The primary structure comprises 255 residues: Homeobox protein Hox-D4 (255 aa).

Residues Glu-31–Lys-128 are disordered. A compositionally biased stretch (pro residues) spans Glu-94–Gly-109. The Antp-type hexapeptide signature appears at Val-133–Lys-138. The homeobox DNA-binding region spans Pro-154–His-213. The tract at residues Asp-212 to Leu-255 is disordered. Positions Ser-222–Ser-234 are enriched in low complexity. The span at Ala-245–Leu-255 shows a compositional bias: basic and acidic residues.

Belongs to the Antp homeobox family. Deformed subfamily. Forms a DNA-binding heterodimer with transcription factor PBX1.

It localises to the nucleus. In terms of biological role, sequence-specific transcription factor which is part of a developmental regulatory system that provides cells with specific positional identities on the anterior-posterior axis. This chain is Homeobox protein Hox-D4 (HOXD4), found in Gorilla gorilla gorilla (Western lowland gorilla).